The following is a 472-amino-acid chain: Sulfate adenylyltransferase subunit 1 (472 aa).

One can recognise a tr-type G domain in the interval K22–Y239. Residues G31 to S38 form a G1 region. GTP is bound at residue G31–S38. The tract at residues G89 to D93 is G2. The G3 stretch occupies residues D110–G113. GTP-binding positions include D110 to H114 and N165 to D168. Residues N165–D168 are G4. The segment at S202–L204 is G5.

Belongs to the TRAFAC class translation factor GTPase superfamily. Classic translation factor GTPase family. CysN/NodQ subfamily. In terms of assembly, heterodimer composed of CysD, the smaller subunit, and CysN.

It catalyses the reaction sulfate + ATP + H(+) = adenosine 5'-phosphosulfate + diphosphate. It functions in the pathway sulfur metabolism; hydrogen sulfide biosynthesis; sulfite from sulfate: step 1/3. Functionally, with CysD forms the ATP sulfurylase (ATPS) that catalyzes the adenylation of sulfate producing adenosine 5'-phosphosulfate (APS) and diphosphate, the first enzymatic step in sulfur assimilation pathway. APS synthesis involves the formation of a high-energy phosphoric-sulfuric acid anhydride bond driven by GTP hydrolysis by CysN coupled to ATP hydrolysis by CysD. The protein is Sulfate adenylyltransferase subunit 1 of Cellvibrio japonicus (strain Ueda107) (Pseudomonas fluorescens subsp. cellulosa).